A 577-amino-acid polypeptide reads, in one-letter code: Secreted LysM effector Lys4 (577 aa).

The signal sequence occupies residues 1–19; sequence MRALTAAVLFVAGLTPVLA. The region spanning 38–85 is the LysM 1 domain; sequence AWYTIVKGDGCDTVEKKFKITPEQFFKWNPDVSTDCVKNFWVGNSYCV. Residues 96–121 show a composition bias toward low complexity; sequence TSTTVKSSSTTQKTSSTSSKLSSSSK. A disordered region spans residues 96-135; sequence TSTTVKSSSTTQKTSSTSSKLSSSSKPVNTTTTPYSTRNP. The segment covering 122 to 135 has biased composition (polar residues); sequence PVNTTTTPYSTRNP. Asn124, Asn140, Asn216, and Asn235 each carry an N-linked (GlcNAc...) asparagine glycan. LysM domains lie at 251–298, 328–375, and 408–455; these read NFYQ…YYCV, KWYQ…WYCV, and QYWL…YVCV. Residues 464-485 show a composition bias toward low complexity; it reads SGSTTTITGPPTKGSNPPTTTT. A disordered region spans residues 464–490; that stretch reads SGSTTTITGPPTKGSNPPTTTTSGGGG. The 49-residue stretch at 510-558 folds into the LysM 5 domain; that stretch reads FWFRGKDGASLFCADIAKDAGVSLPDFLKWNPGVGSNCESLWADTWYCV.

Belongs to the secreted LysM effector family.

In terms of biological role, might have a role in sequestration of chitin oligosaccharides (breakdown products of fungal cell walls that are released during invasion and act as triggers of host immunity) to dampen host defense. The sequence is that of Secreted LysM effector Lys4 from Pochonia chlamydosporia (strain 123) (Metacordyceps chlamydosporia).